The primary structure comprises 1479 residues: Chromosome partition protein MukB (1479 aa).

ATP is bound at residue 34–41; it reads GGNGAGKS. Coiled-coil stretches lie at residues 138-163 and 331-664; these read ETLNDRQARVVSLNELKDKLEAMEGV and QAAS…RLSQ. The interval 665 to 782 is flexible hinge; it reads PGGSEDPRLN…ALPLFGRAAR (118 aa). Coiled-coil stretches lie at residues 831-1112 and 1206-1257; these read DDPE…TAKA and VEAI…MLNQ.

Belongs to the SMC family. MukB subfamily. In terms of assembly, homodimerization via its hinge domain. Binds to DNA via its C-terminal region. Interacts, and probably forms a ternary complex, with MukE and MukF via its C-terminal region. The complex formation is stimulated by calcium or magnesium. Interacts with tubulin-related protein FtsZ.

Its subcellular location is the cytoplasm. It is found in the nucleoid. Plays a central role in chromosome condensation, segregation and cell cycle progression. Functions as a homodimer, which is essential for chromosome partition. Involved in negative DNA supercoiling in vivo, and by this means organize and compact chromosomes. May achieve or facilitate chromosome segregation by condensation DNA from both sides of a centrally located replisome during cell division. In Klebsiella pneumoniae, this protein is Chromosome partition protein MukB.